Consider the following 565-residue polypeptide: Periplasmic trehalase (565 aa).

The first 30 residues, 1 to 30 (MKSPAPSRPQKMALIPACIFLCFAALSVQA), serve as a signal peptide directing secretion. Substrate-binding positions include arginine 152, 159 to 160 (WD), asparagine 196, 205 to 207 (RSQ), 277 to 279 (RPE), and glycine 310. Catalysis depends on proton donor/acceptor residues aspartate 312 and glutamate 496. Glutamate 511 lines the substrate pocket. Positions 539–565 (CDNVPATRPLSESTTQPVKQKEAEPTP) are disordered.

The protein belongs to the glycosyl hydrolase 37 family. In terms of assembly, monomer.

It localises to the periplasm. It catalyses the reaction alpha,alpha-trehalose + H2O = alpha-D-glucose + beta-D-glucose. Its function is as follows. Provides the cells with the ability to utilize trehalose at high osmolarity by splitting it into glucose molecules that can subsequently be taken up by the phosphotransferase-mediated uptake system. The chain is Periplasmic trehalase from Escherichia coli O6:H1 (strain CFT073 / ATCC 700928 / UPEC).